Here is a 600-residue protein sequence, read N- to C-terminus: UvrABC system protein C (600 aa).

Positions 15–100 (NSTGVYQYFN…IKQLHPKYNI (86 aa)) constitute a GIY-YIG domain. The region spanning 203–238 (SVLLKNLEKQMLVLAQNENYEEAAKVRDQIAMIKDL) is the UVR domain.

The protein belongs to the UvrC family. As to quaternary structure, interacts with UvrB in an incision complex.

Its subcellular location is the cytoplasm. The UvrABC repair system catalyzes the recognition and processing of DNA lesions. UvrC both incises the 5' and 3' sides of the lesion. The N-terminal half is responsible for the 3' incision and the C-terminal half is responsible for the 5' incision. This chain is UvrABC system protein C, found in Campylobacter jejuni subsp. jejuni serotype O:2 (strain ATCC 700819 / NCTC 11168).